The chain runs to 343 residues: Aspartate-semialdehyde dehydrogenase (343 aa).

Residues 13 to 16 (TGAV) and 41 to 42 (KS) contribute to the NADP(+) site. R103 is a phosphate binding site. Catalysis depends on C134, which acts as the Acyl-thioester intermediate. Residue Q161 participates in substrate binding. Position 164–165 (164–165 (SG)) interacts with NADP(+). Residue K220 participates in phosphate binding. R241 provides a ligand contact to substrate. H248 acts as the Proton acceptor in catalysis. Position 321 (Q321) interacts with NADP(+).

Belongs to the aspartate-semialdehyde dehydrogenase family. Homodimer.

It catalyses the reaction L-aspartate 4-semialdehyde + phosphate + NADP(+) = 4-phospho-L-aspartate + NADPH + H(+). The protein operates within amino-acid biosynthesis; L-lysine biosynthesis via DAP pathway; (S)-tetrahydrodipicolinate from L-aspartate: step 2/4. Its pathway is amino-acid biosynthesis; L-methionine biosynthesis via de novo pathway; L-homoserine from L-aspartate: step 2/3. It functions in the pathway amino-acid biosynthesis; L-threonine biosynthesis; L-threonine from L-aspartate: step 2/5. In terms of biological role, catalyzes the NADPH-dependent formation of L-aspartate-semialdehyde (L-ASA) by the reductive dephosphorylation of L-aspartyl-4-phosphate. The protein is Aspartate-semialdehyde dehydrogenase of Campylobacter jejuni subsp. jejuni serotype O:2 (strain ATCC 700819 / NCTC 11168).